Consider the following 176-residue polypeptide: Large ribosomal subunit protein uL5 (176 aa).

It belongs to the universal ribosomal protein uL5 family. As to quaternary structure, part of the 50S ribosomal subunit; contacts the 5S rRNA and probably tRNA. Forms a bridge to the 30S subunit in the 70S ribosome.

In terms of biological role, this is one of the proteins that bind and probably mediate the attachment of the 5S RNA into the large ribosomal subunit, where it forms part of the central protuberance. In the 70S ribosome it contacts protein S13 of the 30S subunit (bridge B1b), connecting the 2 subunits; this bridge is implicated in subunit movement. May contact the P site tRNA; the 5S rRNA and some of its associated proteins might help stabilize positioning of ribosome-bound tRNAs. The chain is Large ribosomal subunit protein uL5 from Picrophilus torridus (strain ATCC 700027 / DSM 9790 / JCM 10055 / NBRC 100828 / KAW 2/3).